The chain runs to 213 residues: MSYAYLFKYIIIGDTGVGKSCLLLQFTDKRFQPVHDLTIGVEFGARMINIDGKQIKLQIWDTAGQESFRSITRSYYRGAAGALLVYDITRRETFNHLASWLEDARQHANPNMTIMLIGNKCDLTHRRAVTTEEGEQFAKEHGLIFLETSARTAHNVEEAFINTAKEIYKKIQDGVFDVSNESYGIKVGYGGGNAGPQTVKPGEGGAAKSSSCC.

Residue 13 to 21 participates in GTP binding; sequence GDTGVGKSC. The short motif at 35 to 43 is the Effector region element; it reads HDLTIGVEF. GTP contacts are provided by residues 61–65, 119–122, and 149–151; these read DTAGQ, NKCD, and SAR. The disordered stretch occupies residues 194-213; the sequence is AGPQTVKPGEGGAAKSSSCC. Residues Cys212 and Cys213 are each lipidated (S-geranylgeranyl cysteine).

Belongs to the small GTPase superfamily. Rab family.

It is found in the cell membrane. Protein transport. Probably involved in vesicular traffic. This chain is GTP-binding protein YPTC4 (YPTC4), found in Chlamydomonas reinhardtii (Chlamydomonas smithii).